Consider the following 426-residue polypeptide: DNA polymerase processivity factor component OPG148 (426 aa).

It belongs to the orthopoxvirus OPG148 family. Interacts with the DNA polymerase catalytic subunit OPG071. Interacts with UDG/OPG116. Component of the uracil-DNA glycosylase(UDG)-OPG148-polymerase complex; OPG148 and UDG form a heterodimeric processivity factor that associates with OPG071 to form the processive polymerase holoenzyme. Interacts with OPG117.

Its function is as follows. Plays an essential role in viral DNA replication by acting as the polymerase processivity factor together with protein OPG116. Serves as a bridge which links the DNA polymerase OPG071 and the uracil DNA glycosylase. The chain is DNA polymerase processivity factor component OPG148 (OPG148) from Variola virus (isolate Human/India/Ind3/1967) (VARV).